We begin with the raw amino-acid sequence, 374 residues long: Glutamine synthetase (374 aa).

Residues 2–25 (TTSASSHLNKGIKQVYMSLPQGEK) form a required for glutamine-induced ubiquitination by CRL4(CRBN) and proteasomal degradation region. 2 positions are modified to N6-acetyllysine: lysine 11 and lysine 14. Residues 24–106 (EKVQAMYIWI…VLCESFQVQF (83 aa)) form the GS beta-grasp domain. One can recognise a GS catalytic domain in the interval 114–374 (LRHTCKRIMD…TGDEPFQYKN (261 aa)). Residue glutamate 135 participates in ATP binding. Mn(2+) contacts are provided by glutamate 135, glutamate 137, glutamate 197, and glutamate 204. An ATP-binding site is contributed by 204-209 (EFQIGP). Position 247–248 (247–248 (NW)) interacts with L-glutamate. Histidine 254 serves as a coordination point for Mn(2+). Residues 256 to 258 (NFS), arginine 320, and arginine 325 contribute to the ATP site. Position 320 (arginine 320) interacts with L-glutamate. 337–339 (YFE) provides a ligand contact to ADP. Glutamate 339 serves as a coordination point for Mn(2+). Arginine 341 lines the L-glutamate pocket. Serine 344 bears the Phosphoserine mark.

Belongs to the glutamine synthetase family. Decamer; composed of two pentamers. Interacts with PALMD. Interacts with RHOJ. Interacts with BEST2; this interaction tethers a fraction of GLUL to the membrane, causing a decrease of cytosolic glutamine synthase (GS) activity and inhibits the chloride channel activity of BEST2 by affecting the gating at the aperture in the absence of intracellular glutamate. Requires Mg(2+) as cofactor. It depends on Mn(2+) as a cofactor. Post-translationally, palmitoylated; undergoes autopalmitoylation. In terms of processing, acetylated by EP300/p300; acetylation is stimulated by increased glutamine levels and promotes ubiquitin-mediated proteasomal degradation. Ubiquitinated by ZNRF1. Ubiquitinated by the DCX (DDB1-CUL4-X-box) E3 ubiquitin-protein ligase complex called CRL4(CRBN), leading to proteasomal degradation.

The protein localises to the cytoplasm. It is found in the cytosol. The protein resides in the microsome. It localises to the mitochondrion. Its subcellular location is the cell membrane. It catalyses the reaction L-glutamate + NH4(+) + ATP = L-glutamine + ADP + phosphate + H(+). The enzyme catalyses L-cysteinyl-[protein] + hexadecanoyl-CoA = S-hexadecanoyl-L-cysteinyl-[protein] + CoA. Its activity is regulated as follows. Glutamine synthetase activity is inhibited by methionine sulfoximine (MSO). Functionally, glutamine synthetase that catalyzes the ATP-dependent conversion of glutamate and ammonia to glutamine. Its role depends on tissue localization: in the brain, it regulates the levels of toxic ammonia and converts neurotoxic glutamate to harmless glutamine, whereas in the liver, it is one of the enzymes responsible for the removal of ammonia. Plays a key role in ammonium detoxification during erythropoiesis: the glutamine synthetase activity is required to remove ammonium generated by porphobilinogen deaminase (HMBS) during heme biosynthesis to prevent ammonium accumulation and oxidative stress. Essential for proliferation of fetal skin fibroblasts. Independently of its glutamine synthetase activity, required for endothelial cell migration during vascular development. Involved in angiogenesis by regulating membrane localization and activation of the GTPase RHOJ, possibly by promoting RHOJ palmitoylation. May act as a palmitoyltransferase for RHOJ: able to autopalmitoylate and then transfer the palmitoyl group to RHOJ. Plays a role in ribosomal 40S subunit biogenesis. Through the interaction with BEST2, inhibits BEST2 channel activity by affecting the gating at the aperture in the absence of intracellular L-glutamate, but sensitizes BEST2 to intracellular L-glutamate, which promotes the opening of BEST2 and thus relieves its inhibitory effect on BEST2. In Macaca fascicularis (Crab-eating macaque), this protein is Glutamine synthetase.